The primary structure comprises 181 residues: UPF0302 protein lin2035 (181 aa).

It belongs to the UPF0302 family.

In Listeria innocua serovar 6a (strain ATCC BAA-680 / CLIP 11262), this protein is UPF0302 protein lin2035.